Consider the following 736-residue polypeptide: 1,4-alpha-glucan branching enzyme GlgB (736 aa).

Residue Asp415 is the Nucleophile of the active site. Residue Glu470 is the Proton donor of the active site.

Belongs to the glycosyl hydrolase 13 family. GlgB subfamily. As to quaternary structure, monomer.

The catalysed reaction is Transfers a segment of a (1-&gt;4)-alpha-D-glucan chain to a primary hydroxy group in a similar glucan chain.. The protein operates within glycan biosynthesis; glycogen biosynthesis. Functionally, catalyzes the formation of the alpha-1,6-glucosidic linkages in glycogen by scission of a 1,4-alpha-linked oligosaccharide from growing alpha-1,4-glucan chains and the subsequent attachment of the oligosaccharide to the alpha-1,6 position. The sequence is that of 1,4-alpha-glucan branching enzyme GlgB from Burkholderia orbicola (strain AU 1054).